A 75-amino-acid polypeptide reads, in one-letter code: Large ribosomal subunit protein bL31 (75 aa).

4 residues coordinate Zn(2+): Cys16, Cys18, Cys37, and Cys40.

Belongs to the bacterial ribosomal protein bL31 family. Type A subfamily. In terms of assembly, part of the 50S ribosomal subunit. The cofactor is Zn(2+).

In terms of biological role, binds the 23S rRNA. The protein is Large ribosomal subunit protein bL31 of Pseudomonas syringae pv. tomato (strain ATCC BAA-871 / DC3000).